The following is a 436-amino-acid chain: Probable D-serine dehydratase (436 aa).

At Lys-111 the chain carries N6-(pyridoxal phosphate)lysine.

It belongs to the serine/threonine dehydratase family. DsdA subfamily. The cofactor is pyridoxal 5'-phosphate.

It carries out the reaction D-serine = pyruvate + NH4(+). In Lactiplantibacillus plantarum (strain ATCC BAA-793 / NCIMB 8826 / WCFS1) (Lactobacillus plantarum), this protein is Probable D-serine dehydratase.